Consider the following 173-residue polypeptide: 2-C-methyl-D-erythritol 2,4-cyclodiphosphate synthase (173 aa).

2 residues coordinate a divalent metal cation: aspartate 17 and histidine 19. 4-CDP-2-C-methyl-D-erythritol 2-phosphate-binding positions include 17–19 and 49–50; these read DVH and HS. Histidine 57 provides a ligand contact to a divalent metal cation. 4-CDP-2-C-methyl-D-erythritol 2-phosphate-binding positions include 76-80, 147-150, phenylalanine 154, and arginine 157; these read FPNTD and TTTE.

This sequence belongs to the IspF family. In terms of assembly, homotrimer. A divalent metal cation serves as cofactor.

It carries out the reaction 4-CDP-2-C-methyl-D-erythritol 2-phosphate = 2-C-methyl-D-erythritol 2,4-cyclic diphosphate + CMP. It functions in the pathway isoprenoid biosynthesis; isopentenyl diphosphate biosynthesis via DXP pathway; isopentenyl diphosphate from 1-deoxy-D-xylulose 5-phosphate: step 4/6. Its function is as follows. Involved in the biosynthesis of isopentenyl diphosphate (IPP) and dimethylallyl diphosphate (DMAPP), two major building blocks of isoprenoid compounds. Catalyzes the conversion of 4-diphosphocytidyl-2-C-methyl-D-erythritol 2-phosphate (CDP-ME2P) to 2-C-methyl-D-erythritol 2,4-cyclodiphosphate (ME-CPP) with a corresponding release of cytidine 5-monophosphate (CMP). The protein is 2-C-methyl-D-erythritol 2,4-cyclodiphosphate synthase of Ehrlichia chaffeensis (strain ATCC CRL-10679 / Arkansas).